A 206-amino-acid polypeptide reads, in one-letter code: Large ribosomal subunit protein uL4 (206 aa).

Residues 48–97 (THAVKNRSLVSGGGKKPWKQKHTGRARQGSTRASQWVGGGKAMGPKPRDY) form a disordered region. A compositionally biased stretch (basic residues) spans 63 to 72 (KPWKQKHTGR).

Belongs to the universal ribosomal protein uL4 family. In terms of assembly, part of the 50S ribosomal subunit.

In terms of biological role, one of the primary rRNA binding proteins, this protein initially binds near the 5'-end of the 23S rRNA. It is important during the early stages of 50S assembly. It makes multiple contacts with different domains of the 23S rRNA in the assembled 50S subunit and ribosome. Functionally, forms part of the polypeptide exit tunnel. This is Large ribosomal subunit protein uL4 from Anaeromyxobacter dehalogenans (strain 2CP-C).